The chain runs to 142 residues: Nucleoside diphosphate kinase (142 aa).

Positions 11, 59, 87, 93, 107, and 117 each coordinate ATP. Catalysis depends on histidine 120, which acts as the Pros-phosphohistidine intermediate.

Belongs to the NDK family. In terms of assembly, homotetramer. Mg(2+) serves as cofactor.

Its subcellular location is the cytoplasm. It carries out the reaction a 2'-deoxyribonucleoside 5'-diphosphate + ATP = a 2'-deoxyribonucleoside 5'-triphosphate + ADP. The catalysed reaction is a ribonucleoside 5'-diphosphate + ATP = a ribonucleoside 5'-triphosphate + ADP. Its function is as follows. Major role in the synthesis of nucleoside triphosphates other than ATP. The ATP gamma phosphate is transferred to the NDP beta phosphate via a ping-pong mechanism, using a phosphorylated active-site intermediate. The sequence is that of Nucleoside diphosphate kinase from Aquifex aeolicus (strain VF5).